The chain runs to 303 residues: Thioesterase poxG (303 aa).

The protein belongs to the lcsJ thioesterase family.

It functions in the pathway secondary metabolite biosynthesis. Functionally, thioesterase; part of the gene cluster that mediates the biosynthesis of oxaleimides, cytotoxic compounds containing an unusual disubstituted succinimide moiety. The first step of the pathway is provided by the HR-PKS poxF that serves in a new mode of collaborative biosynthesis with the PKS-NRPS poxE, by providing the olefin containing amino acid substrate via the synthesis of an ACP-bound dec-4-enoate. The cytochrome P450 monooxygenase poxM-catalyzed oxidation at the alpha-position creates the enzyme-bound 2-hydroxydec-4-enoyl-ACP thioester, which may be prone to spontaneous hydrolysis to yield 2-hydroxydec-4-enoic acid due to increased electrophilicity of the carbonyl. 2-hydroxydec-4-enoic acid can then be further oxidized by poxM to yield the alpha-ketoacid 2-oxodec-4-enoicacid, which is reductively aminated by the aminotransferase poxL to yield (S,E)-2-aminodec-4-enoic acid. The Hybrid PKS-NRPS synthetase poxE then performs condensation between the octaketide product of its PKS modules and the amino group of (S,E)-2-aminodec-4-enoic acid which is activated and incorporated by the adenylation domain. The resulting aminoacyl product can be cyclized by the Diels-Alderase PoxQ and reductively released by the reductive (R) domain of poxE to yield an aldehyde intermediate. The released aldehyde is then substrate for a Knoevenagel condensation by the hydrolyase poxO followed by an oxidation at the 5-position of the pyrrolidone ring. The presence of the olefin from the amino acid building block allows for migration of the substituted allyl group to occur. This allylic transposition reaction takes place in a conjugate addition, semipinacol-like fashion to yield a succinimide intermediate. Iterative two-electron oxidations of the C7 methyl of the succinimide intermediate to the carboxylic acid can be catalyzed by one of two remaining cytochrome P450 monooxygenasess poxC or poxD to yield oxaleimide A. Subsequent oxidation yields the maleimide scaffold oxaleimide I. Both oxaleimide A and oxaleimide I can undergo oxidative modifications in the decalin ring to yield the series of products oxaleimides B to H. This Penicillium oxalicum (strain 114-2 / CGMCC 5302) (Penicillium decumbens) protein is Thioesterase poxG.